A 2381-amino-acid polypeptide reads, in one-letter code: Nipped-B-like protein A (2381 aa).

The HEAT 1 repeat unit spans residues 85–124 (SDELEGDVPVLLQLLMSRNPNIFRNKTAPNTPQYPAQAGI). 3 disordered regions span residues 131–211 (PPYK…HLQQ), 240–289 (HLLQ…DIVG), and 329–503 (LAAI…ELPP). The span at 138-158 (GSMQGSPASANYQQASMSHSP) shows a compositional bias: polar residues. Composition is skewed to basic and acidic residues over residues 254–273 (GTKD…KSSE) and 333–355 (ERME…DKDK). Residues 373-389 (GTAGSGSGAPGGGGGAN) show a composition bias toward gly residues. Basic and acidic residues predominate over residues 451 to 473 (VKHEHDHDPEHPHYDDKQPDTPR). The PxVxL motif motif lies at 552-565 (KKSVKPVVVLQKLS). Over residues 570-580 (QRLMRERDSRA) the composition is skewed to basic and acidic residues. Disordered regions lie at residues 570–604 (QRLM…SVLK) and 629–708 (RKRS…NEVA). The span at 581-592 (SKSGKNRLSSGR) shows a compositional bias: polar residues. Composition is skewed to basic and acidic residues over residues 633–642 (TVNERPKYAE) and 658–694 (KDRD…RYDD). HEAT repeat units lie at residues 1299 to 1337 (SQSF…VDPS), 1375 to 1413 (PQLT…EQPN), 1477 to 1516 (YDWF…HILK), and 1843 to 1881 (LIHP…KYTG). Disordered stretches follow at residues 2005-2095 (IPGR…DLDD) and 2228-2271 (LLGG…GDSA). The span at 2006–2021 (PGRKSRKRRRRRRRPQ) shows a compositional bias: basic residues. Positions 2040–2056 (EEERGAQDEERERHSGD) are enriched in basic and acidic residues. A compositionally biased stretch (acidic residues) spans 2057 to 2068 (EEYDDDDYEEDE). A compositionally biased stretch (basic and acidic residues) spans 2077 to 2086 (KPTEDIRQSE).

This sequence belongs to the SCC2/Nipped-B family.

The protein resides in the nucleus. Its function is as follows. May play a structural role in chromatin. Involved in sister chromatid cohesion, possibly by facilitating the cohesin complex loading. Transcription factor, which may promote cortical neuron migration during brain development by regulating the transcription of crucial genes in this process. The protein is Nipped-B-like protein A (nipbla) of Danio rerio (Zebrafish).